We begin with the raw amino-acid sequence, 282 residues long: Phosphatidylserine decarboxylase proenzyme (282 aa).

Catalysis depends on charge relay system; for autoendoproteolytic cleavage activity residues Asp-88, His-144, and Ser-247. Ser-247 functions as the Schiff-base intermediate with substrate; via pyruvic acid; for decarboxylase activity in the catalytic mechanism. At Ser-247 the chain carries Pyruvic acid (Ser); by autocatalysis.

It belongs to the phosphatidylserine decarboxylase family. PSD-B subfamily. Prokaryotic type I sub-subfamily. Heterodimer of a large membrane-associated beta subunit and a small pyruvoyl-containing alpha subunit. Pyruvate serves as cofactor. Is synthesized initially as an inactive proenzyme. Formation of the active enzyme involves a self-maturation process in which the active site pyruvoyl group is generated from an internal serine residue via an autocatalytic post-translational modification. Two non-identical subunits are generated from the proenzyme in this reaction, and the pyruvate is formed at the N-terminus of the alpha chain, which is derived from the carboxyl end of the proenzyme. The autoendoproteolytic cleavage occurs by a canonical serine protease mechanism, in which the side chain hydroxyl group of the serine supplies its oxygen atom to form the C-terminus of the beta chain, while the remainder of the serine residue undergoes an oxidative deamination to produce ammonia and the pyruvoyl prosthetic group on the alpha chain. During this reaction, the Ser that is part of the protease active site of the proenzyme becomes the pyruvoyl prosthetic group, which constitutes an essential element of the active site of the mature decarboxylase.

It is found in the cell membrane. The enzyme catalyses a 1,2-diacyl-sn-glycero-3-phospho-L-serine + H(+) = a 1,2-diacyl-sn-glycero-3-phosphoethanolamine + CO2. It functions in the pathway phospholipid metabolism; phosphatidylethanolamine biosynthesis; phosphatidylethanolamine from CDP-diacylglycerol: step 2/2. Functionally, catalyzes the formation of phosphatidylethanolamine (PtdEtn) from phosphatidylserine (PtdSer). The polypeptide is Phosphatidylserine decarboxylase proenzyme (Xanthomonas campestris pv. campestris (strain B100)).